Here is a 511-residue protein sequence, read N- to C-terminus: Glycerol kinase (511 aa).

Position 11 (Thr11) interacts with ADP. Thr11, Ser12, and Ser13 together coordinate ATP. Thr11 contacts sn-glycerol 3-phosphate. Arg15 lines the ADP pocket. Positions 81, 82, 133, and 242 each coordinate sn-glycerol 3-phosphate. Glycerol-binding residues include Arg81, Glu82, Tyr133, Asp242, and Gln243. ADP-binding residues include Thr264 and Gly321. The ATP site is built by Thr264, Gly321, Gln325, and Gly426. 2 residues coordinate ADP: Gly426 and Asn430.

The protein belongs to the FGGY kinase family.

It catalyses the reaction glycerol + ATP = sn-glycerol 3-phosphate + ADP + H(+). The protein operates within polyol metabolism; glycerol degradation via glycerol kinase pathway; sn-glycerol 3-phosphate from glycerol: step 1/1. Inhibited by fructose 1,6-bisphosphate (FBP). Its function is as follows. Key enzyme in the regulation of glycerol uptake and metabolism. Catalyzes the phosphorylation of glycerol to yield sn-glycerol 3-phosphate. This is Glycerol kinase from Verminephrobacter eiseniae (strain EF01-2).